The primary structure comprises 386 residues: 26S proteasome non-ATPase regulatory subunit 13 homolog B (386 aa).

Ala-2 is modified (N-acetylalanine). The PCI domain maps to 174–347 (FSEFYKNALL…GTVYVSWAQP (174 aa)).

It belongs to the proteasome subunit S11 family. Component of the 19S regulatory particle (RP/PA700) lid subcomplex of the 26S proteasome. The 26S proteasome is composed of a core protease (CP), known as the 20S proteasome, capped at one or both ends by the 19S regulatory particle (RP/PA700). The RP/PA700 complex is composed of at least 17 different subunits in two subcomplexes, the base and the lid, which form the portions proximal and distal to the 20S proteolytic core, respectively. As to expression, ubiquitous with highest expression in flowers.

In terms of biological role, acts as a regulatory subunit of the 26S proteasome which is involved in the ATP-dependent degradation of ubiquitinated proteins. The chain is 26S proteasome non-ATPase regulatory subunit 13 homolog B (RPN9B) from Arabidopsis thaliana (Mouse-ear cress).